Consider the following 815-residue polypeptide: Probable bifunctional folylpolyglutamate synthase/dihydropteroate synthase (815 aa).

Residues 1 to 416 (MRYDEAANFL…LVAGSLFAVA (416 aa)) form a folylpolyglutamate synthase region. Residue 47 to 53 (GSNGKGS) coordinates ATP. The 251-residue stretch at 553 to 803 (TAVMGILNVT…DVPENVAAVR (251 aa)) folds into the Pterin-binding domain. The tract at residues 555–815 (VMGILNVTPD…EATRTGADAE (261 aa)) is DHPS. A Mg(2+)-binding site is contributed by N560. (7,8-dihydropterin-6-yl)methyl diphosphate-binding positions include T600, D633, N652, D722, K758, and 791-793 (RVH).

It in the N-terminal section; belongs to the folylpolyglutamate synthase family. In the C-terminal section; belongs to the DHPS family. Mg(2+) is required as a cofactor.

The catalysed reaction is (6S)-5,6,7,8-tetrahydrofolyl-(gamma-L-Glu)(n) + L-glutamate + ATP = (6S)-5,6,7,8-tetrahydrofolyl-(gamma-L-Glu)(n+1) + ADP + phosphate + H(+). The enzyme catalyses (7,8-dihydropterin-6-yl)methyl diphosphate + 4-aminobenzoate = 7,8-dihydropteroate + diphosphate. It functions in the pathway cofactor biosynthesis; tetrahydrofolylpolyglutamate biosynthesis. The protein operates within cofactor biosynthesis; tetrahydrofolate biosynthesis; 7,8-dihydrofolate from 2-amino-4-hydroxy-6-hydroxymethyl-7,8-dihydropteridine diphosphate and 4-aminobenzoate: step 1/2. Can complement an H.volcanii mutant strain that is thymidine auxotroph because it lacks the two dihydrofolate reductase genes encoded by hdrA and hdrB. This Halobacterium salinarum (strain ATCC 700922 / JCM 11081 / NRC-1) (Halobacterium halobium) protein is Probable bifunctional folylpolyglutamate synthase/dihydropteroate synthase (folP).